Reading from the N-terminus, the 355-residue chain is MVCCFGKKDERTKTIEKELHKERKIMRRQINLLLLGSGESGKSTFVKQMHIIHGAGEFTADEVRAYRQQIYQNAISAMRVLLDARNKLGIAWEDPKRQVEVEKVMRFSVGDLLKGIDFTTFVEVAPIISDFWNDAAIRKTYEQRNLFQISDSCQYFFEHIPRIAMPDFYPTNRDILFCRKATRGISEHIFEINKIPFRFIDVGGQRSQRQKWFQCFTDITSILFMVASNEYDQVILEDRRTNRVVESRSVFETIVNNRAFSNVSIILFMNKNDLLQEKVPKSDIRQYFTDFTGDHTLVRDVQFFLVDKFEASRRDRARPFFYHFTTAVDTENIRRVFRDVRESILEQNLKTLMMQ.

In terms of domain architecture, G-alpha spans 28 to 355 (RQINLLLLGS…EQNLKTLMMQ (328 aa)). The interval 31–44 (NLLLLGSGESGKST) is G1 motif. GTP contacts are provided by residues 36–43 (GSGESGKS), 176–182 (LFCRKAT), 201–205 (DVGGQ), 270–273 (NKND), and A327. S43 and T182 together coordinate Mg(2+). The segment at 174-182 (DILFCRKAT) is G2 motif. The G3 motif stretch occupies residues 197 to 206 (FRFIDVGGQR). Residues 266-273 (ILFMNKND) are G4 motif. The tract at residues 325–330 (TTAVDT) is G5 motif.

It belongs to the G-alpha family. In terms of assembly, g proteins are composed of 3 units; alpha, beta and gamma. The alpha chain contains the guanine nucleotide binding site.

Its function is as follows. Guanine nucleotide-binding proteins (G proteins) are involved as modulators or transducers in various transmembrane signaling systems. May play a role in resistance to fungal infection in the epidermis by regulating the up-regulation of several antimicrobial peptides of the NLP and CNC families. Upstream of plc-3, tpa-1 and the p38-like pathway, required for the expression of antimicrobial peptide nlp-29 in the epidermis in response to fungal infection or physical injury. This Caenorhabditis elegans protein is Guanine nucleotide-binding protein alpha-12 subunit (gpa-12).